Consider the following 415-residue polypeptide: Gamma-glutamyl phosphate reductase (415 aa).

This sequence belongs to the gamma-glutamyl phosphate reductase family.

The protein resides in the cytoplasm. The enzyme catalyses L-glutamate 5-semialdehyde + phosphate + NADP(+) = L-glutamyl 5-phosphate + NADPH + H(+). It functions in the pathway amino-acid biosynthesis; L-proline biosynthesis; L-glutamate 5-semialdehyde from L-glutamate: step 2/2. Catalyzes the NADPH-dependent reduction of L-glutamate 5-phosphate into L-glutamate 5-semialdehyde and phosphate. The product spontaneously undergoes cyclization to form 1-pyrroline-5-carboxylate. The sequence is that of Gamma-glutamyl phosphate reductase from Clostridium perfringens (strain SM101 / Type A).